Reading from the N-terminus, the 675-residue chain is Protein brown (675 aa).

Over 1 to 419 (MQESGGSSGQ…TEDLRNIRSG (419 aa)) the chain is Cytoplasmic. In terms of domain architecture, ABC transporter spans 34–261 (YSFWNECRKK…EVVAESHESL (228 aa)). Position 66-73 (66-73 (GGSGAGKT)) interacts with ATP. The interval 229-249 (EDSFETPSGESSASGSGSKSI) is disordered. Positions 236-248 (SGESSASGSGSKS) are enriched in low complexity. Residues 420 to 440 (LIAFGFFMITAVTLSLMYSGI) form a helical membrane-spanning segment. Residues 441-460 (GGLTQRTVQDVGGSIFMLSN) are Extracellular-facing. Residues 461 to 481 (EMIFTFSYGVTYIFPAALPII) form a helical membrane-spanning segment. The Cytoplasmic portion of the chain corresponds to 482 to 497 (RREVGEGTYSLSAYYV). Residues 498–518 (ALVLSFVPVAFFKGYVFLSVI) traverse the membrane as a helical segment. Over 519 to 531 (YASIYYTRGFLLY) the chain is Extracellular. A helical transmembrane segment spans residues 532 to 552 (LSMGFLMSLSAVAAVGYGVFL). The Cytoplasmic segment spans residues 553-568 (SSLFESDKMASECAAP). A helical membrane pass occupies residues 569–589 (FDLIFLIFGGTYMNVDTVPGL). At 590–644 (KYLSLFFYSNEALMYKFWIDIDNIDCPVNEDHPCIKTGVEVLQQGSYRNADYTYW) the chain is on the extracellular side. A helical transmembrane segment spans residues 645 to 665 (LDCFSLVVVAVIFHIVSFGLV). Residues 666 to 675 (RRYIHRSGYY) lie on the Cytoplasmic side of the membrane.

The protein belongs to the ABC transporter superfamily. ABCG family. Eye pigment precursor importer (TC 3.A.1.204) subfamily. In terms of assembly, may form a heterodimer with w/white.

The protein localises to the membrane. The catalysed reaction is guanine(out) + ATP + H2O = guanine(in) + ADP + phosphate + H(+). It catalyses the reaction riboflavin(in) + ATP + H2O = riboflavin(out) + ADP + phosphate + H(+). It carries out the reaction (6S)-5,6,7,8-tetrahydrofolate(out) + ATP + H2O = (6S)-5,6,7,8-tetrahydrofolate(in) + ADP + phosphate + H(+). Its function is as follows. ATP-dependent transporter of the ATP-binding cassette (ABC) family which transports various molecules including bioamines, neurotransmitters and metabolic intermediates. In the eye and probably in association with w/white, required for the transport of the eye red pigment precursor, guanine, into pigment cell granules. In Malpighian tubules, involved in guanine uptake. Probably in association with w/white, involved in aging-induced intestinal stem cell proliferation in the midgut by regulating tetrahydrofolate transport. The protein is Protein brown of Drosophila melanogaster (Fruit fly).